Reading from the N-terminus, the 404-residue chain is MKLPIYLDYSATCPVDPRVAEKMVQYMTMDGTFGNPASRSHRYGWQAEEAVDTAREQIADLINADPREIVFTSGATESDNLAIKGAAHFYSKKGKHVITCKTEHKAVLDPCRQLEREGFEVTYLEPESNGLVDLSKLQAAMREDTVLVSIMHVNNEIGVIQDITAIGDLCRERKIVFHVDAAQSAGKLPIDVQEMKVDLISFSAHKAYGPKGIGALYVRRKPRIRLEAQMHGGGHERGFRSGTLPTHQIVGMGEAFRVAKEDMQKDYDHALALRNRLLDGVKDLEAVTVNGDLEQRVPHNLNVSFAFVEGESLLMSLKDLAVSSGSACTSASLEPSYVLRALGLDDELAHSSVRFSFGRFTTEAEIDYAIEQIRVAVTKLRDMSPLWDMYKEGIDLSTVEWAHH.

Pyridoxal 5'-phosphate-binding positions include 75-76, N155, Q183, and 203-205; these read AT and SAH. K206 carries the N6-(pyridoxal phosphate)lysine modification. T243 provides a ligand contact to pyridoxal 5'-phosphate. Catalysis depends on C328, which acts as the Cysteine persulfide intermediate. C328 lines the [2Fe-2S] cluster pocket.

Belongs to the class-V pyridoxal-phosphate-dependent aminotransferase family. NifS/IscS subfamily. As to quaternary structure, homodimer. Forms a heterotetramer with IscU, interacts with other sulfur acceptors. It depends on pyridoxal 5'-phosphate as a cofactor.

Its subcellular location is the cytoplasm. It catalyses the reaction (sulfur carrier)-H + L-cysteine = (sulfur carrier)-SH + L-alanine. It participates in cofactor biosynthesis; iron-sulfur cluster biosynthesis. Its function is as follows. Master enzyme that delivers sulfur to a number of partners involved in Fe-S cluster assembly, tRNA modification or cofactor biosynthesis. Catalyzes the removal of elemental sulfur atoms from cysteine to produce alanine. Functions as a sulfur delivery protein for Fe-S cluster synthesis onto IscU, an Fe-S scaffold assembly protein, as well as other S acceptor proteins. This chain is Cysteine desulfurase IscS, found in Vibrio campbellii (strain ATCC BAA-1116).